Here is a 465-residue protein sequence, read N- to C-terminus: Ribulose bisphosphate carboxylase large chain (465 aa).

Lys-4 bears the N6,N6,N6-trimethyllysine mark. Residues Asn-113 and Thr-163 each coordinate substrate. Lys-165 acts as the Proton acceptor in catalysis. Lys-167 is a substrate binding site. Positions 191, 193, and 194 each coordinate Mg(2+). N6-carboxylysine is present on Lys-191. The Proton acceptor role is filled by His-284. Substrate-binding residues include Arg-285, His-317, and Ser-369.

It belongs to the RuBisCO large chain family. Type I subfamily. As to quaternary structure, heterohexadecamer of 8 large chains and 8 small chains; disulfide-linked. The disulfide link is formed within the large subunit homodimers. Mg(2+) serves as cofactor. The disulfide bond which can form in the large chain dimeric partners within the hexadecamer appears to be associated with oxidative stress and protein turnover.

Its subcellular location is the plastid. The protein resides in the chloroplast. The catalysed reaction is 2 (2R)-3-phosphoglycerate + 2 H(+) = D-ribulose 1,5-bisphosphate + CO2 + H2O. It catalyses the reaction D-ribulose 1,5-bisphosphate + O2 = 2-phosphoglycolate + (2R)-3-phosphoglycerate + 2 H(+). In terms of biological role, ruBisCO catalyzes two reactions: the carboxylation of D-ribulose 1,5-bisphosphate, the primary event in carbon dioxide fixation, as well as the oxidative fragmentation of the pentose substrate in the photorespiration process. Both reactions occur simultaneously and in competition at the same active site. The protein is Ribulose bisphosphate carboxylase large chain of Morella cerifera (Wax myrtle).